A 241-amino-acid chain; its full sequence is UPF0173 metal-dependent hydrolase Haur_4333 (241 aa).

Belongs to the UPF0173 family.

This chain is UPF0173 metal-dependent hydrolase Haur_4333, found in Herpetosiphon aurantiacus (strain ATCC 23779 / DSM 785 / 114-95).